A 1025-amino-acid chain; its full sequence is Dihydropyrimidine dehydrogenase [NADP(+)] (1025 aa).

Residues 69 to 100 enclose the 4Fe-4S ferredoxin-type 1 domain; sequence ERGALREAMRCLKCADAPCQKSCPTNLDIKSF. [4Fe-4S] cluster is bound by residues cysteine 79, cysteine 82, cysteine 87, and cysteine 91. Valine 129 lines the FAD pocket. Positions 130, 136, 140, and 156 each coordinate [4Fe-4S] cluster. FAD is bound by residues 194 to 198, 218 to 226, arginine 235, and leucine 261; these read GAGPA and EKQEYVGGI. NADP(+) is bound by residues 340-343, 364-365, and arginine 371; these read AGDT and RK. Lysine 384 carries the N6-acetyllysine modification. Residues 437–439 and 481–487 each bind NADP(+); these read AFG and DVVGIAN. 480 to 489 is an FAD binding site; that stretch reads GDVVGIANTT. Residues serine 550 and 574–575 each bind FMN; that span reads KT. Residues asparagine 609 and 668-670 each bind substrate; that span reads NLS. Residue cysteine 671 is the Proton acceptor of the active site. Lysine 709 is an FMN binding site. 736 to 737 is a substrate binding site; the sequence is NT. Residues glycine 767, 793 to 795, and 816 to 817 contribute to the FMN site; these read TGG and CS. 4Fe-4S ferredoxin-type domains lie at 944 to 976 and 978 to 1007; these read VVAV…FDPE and HLPT…MVSR. Cysteine 953, cysteine 956, cysteine 959, cysteine 963, cysteine 986, cysteine 989, cysteine 992, and cysteine 996 together coordinate [4Fe-4S] cluster.

Belongs to the dihydropyrimidine dehydrogenase family. As to quaternary structure, homodimer. FAD is required as a cofactor. FMN serves as cofactor. It depends on [4Fe-4S] cluster as a cofactor.

It localises to the cytoplasm. It carries out the reaction 5,6-dihydrouracil + NADP(+) = uracil + NADPH + H(+). It catalyses the reaction 5,6-dihydrothymine + NADP(+) = thymine + NADPH + H(+). It participates in amino-acid biosynthesis; beta-alanine biosynthesis. With respect to regulation, inactivated by 5-iodouracil. In terms of biological role, involved in pyrimidine base degradation. Catalyzes the reduction of uracil and thymine. Also involved the degradation of the chemotherapeutic drug 5-fluorouracil. In Bos taurus (Bovine), this protein is Dihydropyrimidine dehydrogenase [NADP(+)] (DPYD).